The following is a 317-amino-acid chain: Acetylglutamate kinase (317 aa).

Residues 75–76 (GG), R97, and N196 each bind substrate.

Belongs to the acetylglutamate kinase family. ArgB subfamily.

The protein resides in the cytoplasm. It catalyses the reaction N-acetyl-L-glutamate + ATP = N-acetyl-L-glutamyl 5-phosphate + ADP. It participates in amino-acid biosynthesis; L-arginine biosynthesis; N(2)-acetyl-L-ornithine from L-glutamate: step 2/4. Functionally, catalyzes the ATP-dependent phosphorylation of N-acetyl-L-glutamate. This chain is Acetylglutamate kinase, found in Corynebacterium jeikeium (strain K411).